The following is a 331-amino-acid chain: 3-dehydroquinate synthase homolog (331 aa).

It belongs to the archaeal-type DHQ synthase family.

The polypeptide is 3-dehydroquinate synthase homolog (Aquifex aeolicus (strain VF5)).